Reading from the N-terminus, the 100-residue chain is Large ribosomal subunit protein uL23 (100 aa).

This sequence belongs to the universal ribosomal protein uL23 family. As to quaternary structure, part of the 50S ribosomal subunit. Contacts protein L29, and trigger factor when it is bound to the ribosome.

Its function is as follows. One of the early assembly proteins it binds 23S rRNA. One of the proteins that surrounds the polypeptide exit tunnel on the outside of the ribosome. Forms the main docking site for trigger factor binding to the ribosome. The sequence is that of Large ribosomal subunit protein uL23 from Mycobacterium tuberculosis (strain ATCC 25177 / H37Ra).